A 204-amino-acid polypeptide reads, in one-letter code: Potassium-transporting ATPase KdpC subunit (204 aa).

Residues 21–41 traverse the membrane as a helical segment; it reads AALVIFVGLSLVTGVLYPVVV.

It belongs to the KdpC family. In terms of assembly, the system is composed of three essential subunits: KdpA, KdpB and KdpC.

The protein localises to the cell inner membrane. Functionally, part of the high-affinity ATP-driven potassium transport (or Kdp) system, which catalyzes the hydrolysis of ATP coupled with the electrogenic transport of potassium into the cytoplasm. This subunit acts as a catalytic chaperone that increases the ATP-binding affinity of the ATP-hydrolyzing subunit KdpB by the formation of a transient KdpB/KdpC/ATP ternary complex. The polypeptide is Potassium-transporting ATPase KdpC subunit (Ralstonia nicotianae (strain ATCC BAA-1114 / GMI1000) (Ralstonia solanacearum)).